Here is a 514-residue protein sequence, read N- to C-terminus: Pantetheinase (514 aa).

The first 22 residues, 1–22 (MITSRLLVYVAVLVLCVIKVSS), serve as a signal peptide directing secretion. A glycan (N-linked (GlcNAc...) asparagine) is linked at N39. The CN hydrolase domain maps to 40-307 (ATLVPVSHEE…GKLLLSQLDS (268 aa)). The active-site Proton acceptor is E80. N-linked (GlcNAc...) asparagine glycans are attached at residues N87 and N147. Residue K179 is the Proton donor of the active site. Residue C212 is the Nucleophile of the active site. 2 N-linked (GlcNAc...) asparagine glycosylation sites follow: N316 and N354. D492 is lipidated: GPI-anchor amidated aspartate. The propeptide at 493–514 (PRSQVPGVMLLVIIPIVCSLSW) is removed in mature form.

Belongs to the carbon-nitrogen hydrolase superfamily. BTD/VNN family. As to quaternary structure, monomer.

The protein resides in the cell membrane. It carries out the reaction (R)-pantetheine + H2O = cysteamine + (R)-pantothenate. Its function is as follows. Amidohydrolase that hydrolyzes specifically one of the carboamide linkages in D-pantetheine thus recycling pantothenic acid (vitamin B5) and releasing cysteamine. This chain is Pantetheinase (VNN1), found in Canis lupus familiaris (Dog).